The primary structure comprises 145 residues: 3-hydroxyacyl-[acyl-carrier-protein] dehydratase FabZ (145 aa).

Histidine 47 is an active-site residue.

Belongs to the thioester dehydratase family. FabZ subfamily.

It localises to the cytoplasm. The catalysed reaction is a (3R)-hydroxyacyl-[ACP] = a (2E)-enoyl-[ACP] + H2O. Its function is as follows. Involved in unsaturated fatty acids biosynthesis. Catalyzes the dehydration of short chain beta-hydroxyacyl-ACPs and long chain saturated and unsaturated beta-hydroxyacyl-ACPs. The protein is 3-hydroxyacyl-[acyl-carrier-protein] dehydratase FabZ of Polaromonas sp. (strain JS666 / ATCC BAA-500).